Here is a 478-residue protein sequence, read N- to C-terminus: Dynein regulatory complex subunit 4 (478 aa).

Positions 1–12 are enriched in basic residues; the sequence is MAPKKKGKKGKA. Positions 1-29 are disordered; that stretch reads MAPKKKGKKGKAKGTAIVDGVAPEDMTKE. The interval 1-114 is regulates microtubule-binding; sequence MAPKKKGKKG…LLYEHQNNLA (114 aa). Coiled-coil stretches lie at residues 24 to 207 and 242 to 426; these read EDMT…RKTE and LNNL…ELAR. Residues 115 to 258 form a microtubule-binding region; the sequence is EVKAEGTVVM…NSLKEQMEDM (144 aa). The interaction with SMO stretch occupies residues 357–478; the sequence is QQKTGFKNLL…GPAGLVGAPT (122 aa).

This sequence belongs to the DRC4 family. In terms of assembly, component of the nexin-dynein regulatory complex (N-DRC). Interacts with microtubules. Interacts with SMO. Interacts (via coiled-coil domains) with RAB3B (in GTP-bound form). Interacts with DRC1. Interacts with DRC7. Highly expressed in adult testes and lung. Weakly or not expressed in other tested tissues.

It localises to the cytoplasm. Its subcellular location is the cytoskeleton. It is found in the cell projection. The protein localises to the cilium. The protein resides in the flagellum. It localises to the cilium axoneme. Its subcellular location is the cilium basal body. It is found in the golgi apparatus. The protein localises to the flagellum axoneme. Its function is as follows. Component of the nexin-dynein regulatory complex (N-DRC), a key regulator of ciliary/flagellar motility which maintains the alignment and integrity of the distal axoneme and regulates microtubule sliding in motile axonemes. Plays an important role in the assembly of the N-DRC linker. Plays dual roles at both the primary (or non-motile) cilia to regulate hedgehog signaling and in motile cilia to coordinate cilia movement. Required for proper motile cilia functioning. Positively regulates ciliary smoothened (SMO)-dependent Hedgehog (Hh) signaling pathway by facilitating the trafficking of SMO into the cilium and the stimulation of SMO activity in a GRK2-dependent manner. May play a role in the spermatozoa motility. This Mus musculus (Mouse) protein is Dynein regulatory complex subunit 4 (Gas8).